The sequence spans 441 residues: UBX domain-containing protein 6 (441 aa).

Residues 1–10 are mediates interaction with LMAN1; it reads MKKFFQEIKA. Disordered regions lie at residues 12-57, 62-81, and 86-113; these read IKFK…MAAA, RLEQ…SIRN, and ELRA…EEGS. Basic and acidic residues predominate over residues 27–36; the sequence is VGEKAPKEKP. Residues 51-63 form a VCP/p97-interacting motif (VIM) region; the sequence is EAQMAAAAALARL. In terms of domain architecture, PUB spans 175–244; sequence VDTIAKYLDN…GPEEFYVLSE (70 aa). In terms of domain architecture, UBX spans 332–408; the sequence is RKYTYTLLRV…GLVPSALLTF (77 aa).

As to quaternary structure, interacts with VCP through the PUB domain (via C-terminus) and VIM motif (via N-terminus); the interaction is direct. Forms a ternary complex with CAV1 and VCP. Interacts with SYVN1. Interacts with HERPUD1. Interacts with VCPKMT. May interact with DERL1. Interacts with PLAA, VCP and YOD1; may form a complex involved in macroautophagy. Interacts with LMAN1.

The protein localises to the cytoplasm. Its subcellular location is the cytosol. It localises to the membrane. The protein resides in the nucleus. It is found in the cytoskeleton. The protein localises to the microtubule organizing center. Its subcellular location is the centrosome. It localises to the early endosome membrane. The protein resides in the late endosome membrane. It is found in the lysosome membrane. Its function is as follows. May negatively regulate the ATPase activity of VCP, an ATP-driven segregase that associates with different cofactors to control a wide variety of cellular processes. As a cofactor of VCP, it may play a role in the transport of CAV1 to lysosomes for degradation. It may also play a role in endoplasmic reticulum-associated degradation (ERAD) of misfolded proteins. Together with VCP and other cofactors, it may play a role in macroautophagy, regulating for instance the clearance of damaged lysosomes. The protein is UBX domain-containing protein 6 of Bos taurus (Bovine).